The sequence spans 335 residues: Ferrochelatase (335 aa).

Residues H211 and E290 each coordinate Fe cation.

The protein belongs to the ferrochelatase family.

It is found in the cytoplasm. The catalysed reaction is heme b + 2 H(+) = protoporphyrin IX + Fe(2+). Its pathway is porphyrin-containing compound metabolism; protoheme biosynthesis; protoheme from protoporphyrin-IX: step 1/1. In terms of biological role, catalyzes the ferrous insertion into protoporphyrin IX. The sequence is that of Ferrochelatase from Sulfurihydrogenibium sp. (strain YO3AOP1).